Reading from the N-terminus, the 778-residue chain is MLPRPLRLLLDTTPPGGVVLSSFRSRDPEEGGDPGGRAVGGGQEEEDEEEEEASVSVWDEEEDGATFTVTSRQYRPLDPLAPLPPPRSSRRLRAGTLEALVRHLLDARTAGADMMFTPALLATHRAFTSTPALFGLVADRLEALESHPPGELERTTGVAISVLSTWLASHPEDFGSEVKGQLDRLESFLLRTGYAAREGVVGGSADLIRNLRARVDPRAPDLPKPLALPGDSPADPTDVLVFLADHLAEQLTLLDAELFLNLIPSQCLGGLWGHRDRPGHSHLCPSVRATVTQFNKVAGAVVSSVLGATSIGEGPREVTVRPLRPPQRARLLEKWIRVAEECRLLRNFSSVYAVVSALQSSPIHRLRAAWGETTRDSLRVFSSLCQIFSEEDNYSQSRELLMQEVKPQPPVEPHSKKAPRSGFRGGGVVPYLGTFLKDLVMLDAASKDELENGYINFDKRRKEFAILSELLRLQKECRGYDLRPNSDIQQWLQGLQPLTEAQSHRVSCEVEPPGTSDSPAARTPRPTLVITQWTEVLGSVGGPTPLVSWDRPSVGGDEVPGTPAPLLTRLAQHMKWPSVSSLDSALESSPSLHSPADPGHLSPPASSPRPSRGHRRSASCGSPLSGNTGEGTSRSAGCGGGVSGPGSSDCRIIRVQMELGEDGSVYKSILVTSQDKAPSVISRVLKKNNRDSAVASEFELVQLLPGDRELTIPHSANVFYAMDGASHDFLLRQRRRPSAATPGSHSGPSASGTPPSEGGGGSFPRIKATGRKIARALF.

The span at Met-1 to Pro-15 shows a compositional bias: low complexity. Positions Met-1–Asp-59 are disordered. A compositionally biased stretch (gly residues) spans Asp-33–Gly-42. Positions Gln-43–Asp-59 are enriched in acidic residues. The region spanning Ser-88–Arg-212 is the N-terminal Ras-GEF domain. The 271-residue stretch at Leu-243–Pro-513 folds into the Ras-GEF domain. Disordered regions lie at residues Ser-503–Pro-524, Gly-541–Ala-564, Ser-581–Ser-647, and Arg-735–Thr-769. Over residues Ser-581–Leu-592 the composition is skewed to low complexity. The segment covering Cys-620–Thr-632 has biased composition (polar residues). The region spanning Asp-649–Arg-736 is the Ras-associating domain. A compositionally biased stretch (low complexity) spans Ser-738–Ser-756.

As to quaternary structure, interacts with SAMD9.

Probable guanine nucleotide exchange factor. Putative effector of Ras and/or Rap. Associates with the GTP-bound form of Rap 1A and H-Ras in vitro. The sequence is that of Ral guanine nucleotide dissociation stimulator-like 2 (Rgl2) from Mus musculus (Mouse).